Reading from the N-terminus, the 248-residue chain is PF03932 family protein CutC (248 aa).

The protein belongs to the CutC family.

It localises to the cytoplasm. The sequence is that of PF03932 family protein CutC from Porphyromonas gingivalis (strain ATCC 33277 / DSM 20709 / CIP 103683 / JCM 12257 / NCTC 11834 / 2561).